The sequence spans 330 residues: Interleukin-12 subunit beta (330 aa).

The first 22 residues, 1 to 22 (MHPQQLVVSWFSLVLLASPIMA), serve as a signal peptide directing secretion. Residues 23 to 106 (IWELEKNVYV…LSHSLLLLHK (84 aa)) form the Ig-like C2-type domain. C50 and C90 are joined by a disulfide. Residues N136 and N224 are each glycosylated (N-linked (GlcNAc...) asparagine). Residues 239–330 (PPKNLQLKPL…WSEWASVSCS (92 aa)) enclose the Fibronectin type-III domain.

It belongs to the IL-12B family. In terms of assembly, heterodimer with IL12A; disulfide-linked. The heterodimer is known as interleukin IL-12. Heterodimer with IL23A; disulfide-linked. The heterodimer is known as interleukin IL-23. Also secreted as a monomer. Interacts with NBR1; this interaction promotes IL-12 secretion.

The protein resides in the secreted. In terms of biological role, cytokine that can act as a growth factor for activated T and NK cells, enhance the lytic activity of NK/lymphokine-activated killer cells, and stimulate the production of IFN-gamma by resting PBMC. Associates with IL23A to form the IL-23 interleukin, a heterodimeric cytokine which functions in innate and adaptive immunity. IL-23 may constitute with IL-17 an acute response to infection in peripheral tissues. IL-23 binds to a heterodimeric receptor complex composed of IL12RB1 and IL23R, activates the Jak-Stat signaling cascade, stimulates memory rather than naive T-cells and promotes production of pro-inflammatory cytokines. IL-23 induces autoimmune inflammation and thus may be responsible for autoimmune inflammatory diseases and may be important for tumorigenesis. The chain is Interleukin-12 subunit beta (IL12B) from Lama glama (Llama).